A 217-amino-acid chain; its full sequence is Frizzled-8 (217 aa).

At alanine 1–cysteine 26 the chain is on the extracellular side. Residues threonine 27–leucine 47 form a helical membrane-spanning segment. Topologically, residues serine 48 to glutamine 69 are cytoplasmic. The chain crosses the membrane as a helical span at residues tyrosine 70 to serine 90. At serine 91–glycine 113 the chain is on the extracellular side. N-linked (GlcNAc...) asparagine glycosylation is present at asparagine 105. The chain crosses the membrane as a helical span at residues phenylalanine 114 to phenylalanine 134. The Cytoplasmic portion of the chain corresponds to valine 135–arginine 160. A helical transmembrane segment spans residues isoleucine 161 to tyrosine 181. The Extracellular segment spans residues glutamate 182–alanine 209. Residue asparagine 194 is glycosylated (N-linked (GlcNAc...) asparagine). Residues valine 210–methionine 217 form a helical membrane-spanning segment.

The protein belongs to the G-protein coupled receptor Fz/Smo family.

Its subcellular location is the membrane. It localises to the cell membrane. Receptor for Wnt proteins. Most of frizzled receptors are coupled to the beta-catenin canonical signaling pathway, which leads to the activation of disheveled proteins, inhibition of GSK-3 kinase, nuclear accumulation of beta-catenin and activation of Wnt target genes. A second signaling pathway involving PKC and calcium fluxes has been seen for some family members, but it is not yet clear if it represents a distinct pathway or if it can be integrated in the canonical pathway, as PKC seems to be required for Wnt-mediated inactivation of GSK-3 kinase. Both pathways seem to involve interactions with G-proteins. May be involved in transduction and intercellular transmission of polarity information during tissue morphogenesis and/or in differentiated tissues. The polypeptide is Frizzled-8 (FZD8) (Gallus gallus (Chicken)).